We begin with the raw amino-acid sequence, 362 residues long: Nicotinate-nucleotide--dimethylbenzimidazole phosphoribosyltransferase (362 aa).

Catalysis depends on E321, which acts as the Proton acceptor.

It belongs to the CobT family.

The enzyme catalyses 5,6-dimethylbenzimidazole + nicotinate beta-D-ribonucleotide = alpha-ribazole 5'-phosphate + nicotinate + H(+). Its pathway is nucleoside biosynthesis; alpha-ribazole biosynthesis; alpha-ribazole from 5,6-dimethylbenzimidazole: step 1/2. Its function is as follows. Catalyzes the synthesis of alpha-ribazole-5'-phosphate from nicotinate mononucleotide (NAMN) and 5,6-dimethylbenzimidazole (DMB). This chain is Nicotinate-nucleotide--dimethylbenzimidazole phosphoribosyltransferase, found in Clostridium tetani (strain Massachusetts / E88).